Reading from the N-terminus, the 229-residue chain is 2,3-bisphosphoglycerate-dependent phosphoglycerate mutase (229 aa).

Substrate-binding positions include 7–14, 20–21, arginine 59, 86–89, lysine 97, 113–114, and 182–183; these read RHGQSEWN, TG, ERHY, RR, and GN. The active-site Tele-phosphohistidine intermediate is histidine 8. Glutamate 86 serves as the catalytic Proton donor/acceptor.

Belongs to the phosphoglycerate mutase family. BPG-dependent PGAM subfamily.

The catalysed reaction is (2R)-2-phosphoglycerate = (2R)-3-phosphoglycerate. The protein operates within carbohydrate degradation; glycolysis; pyruvate from D-glyceraldehyde 3-phosphate: step 3/5. In terms of biological role, catalyzes the interconversion of 2-phosphoglycerate and 3-phosphoglycerate. The protein is 2,3-bisphosphoglycerate-dependent phosphoglycerate mutase of Listeria innocua serovar 6a (strain ATCC BAA-680 / CLIP 11262).